A 227-amino-acid chain; its full sequence is MESFEKLEKLLSYSFKNKELLIEALSHPSLRQHHEYKDDKDYERLEFLGDAVLNLVITEILFRNFANYNEGNLAKIRSYLVCKETICMVGAKLTLKNYIIMTHGEEVAGGRDNLNNIENATEALIAAIYLDSNIETTHDIIEKLWAEFIKVQNLTDYDPKTALQEWAQASDHHLPIYRLIKREGASHSSTFTVLVKVKDYEQTGTGHAIKEAEKNAARSLLHRLKND.

The RNase III domain maps to 4–133 (FEKLEKLLSY…LIAAIYLDSN (130 aa)). Residue E46 participates in Mg(2+) binding. Residue D50 is part of the active site. Residues N119 and E122 each contribute to the Mg(2+) site. Residue E122 is part of the active site. The DRBM domain maps to 158–226 (DPKTALQEWA…ARSLLHRLKN (69 aa)).

The protein belongs to the ribonuclease III family. As to quaternary structure, homodimer. Requires Mg(2+) as cofactor.

It is found in the cytoplasm. The enzyme catalyses Endonucleolytic cleavage to 5'-phosphomonoester.. Its function is as follows. Digests double-stranded RNA. Involved in the processing of primary rRNA transcript to yield the immediate precursors to the large and small rRNAs (23S and 16S). Processes some mRNAs, and tRNAs when they are encoded in the rRNA operon. Processes pre-crRNA and tracrRNA of type II CRISPR loci if present in the organism. The sequence is that of Ribonuclease 3 from Rickettsia africae (strain ESF-5).